Consider the following 125-residue polypeptide: Transmembrane protein 14EP (125 aa).

2 consecutive transmembrane segments (helical) span residues 9 to 29 and 81 to 101; these read VPLYWLGFVYAALAALGGISG and ILTLWNIYACGFSCRCLLIVS.

The protein belongs to the TMEM14 family.

It localises to the membrane. The polypeptide is Transmembrane protein 14EP (TMEM14EP) (Homo sapiens (Human)).